A 265-amino-acid polypeptide reads, in one-letter code: 3-methyl-2-oxobutanoate hydroxymethyltransferase (265 aa).

Mg(2+)-binding residues include D43 and D82. 3-methyl-2-oxobutanoate is bound by residues 43–44, D82, and K111; that span reads DS. Residue E113 coordinates Mg(2+). The active-site Proton acceptor is the E180.

This sequence belongs to the PanB family. Homodecamer; pentamer of dimers. Mg(2+) serves as cofactor.

The protein localises to the cytoplasm. The catalysed reaction is 3-methyl-2-oxobutanoate + (6R)-5,10-methylene-5,6,7,8-tetrahydrofolate + H2O = 2-dehydropantoate + (6S)-5,6,7,8-tetrahydrofolate. It participates in cofactor biosynthesis; (R)-pantothenate biosynthesis; (R)-pantoate from 3-methyl-2-oxobutanoate: step 1/2. Catalyzes the reversible reaction in which hydroxymethyl group from 5,10-methylenetetrahydrofolate is transferred onto alpha-ketoisovalerate to form ketopantoate. In Francisella tularensis subsp. novicida (strain U112), this protein is 3-methyl-2-oxobutanoate hydroxymethyltransferase.